Reading from the N-terminus, the 1293-residue chain is MAQQIVQSLQDEGTQSLKLDFSMKYVLGYRSDFKNNIFQYTMNDQNRIIYPAGNTIVISNNENKQQFINCIPGTKGITCMTLSPSKRLLAWSEDCDSGIIVVFDLIKLDKLEKAKNQNYQEPSDKDKLDKQAEKDRRDRFEKEKREKIDKLQKEVKRIITTLDCKSRHYVALDFNKINEKRIVALSCAPDWQLIYFQLDKQKTVIINQVPLKVGDNMRYTHCFFHPKEEDFIVAIGTGAIKPYKLGADGQFKQKDPPFVKKESKDQAHSPNYLSYCILQDGYMVIGTDMGEILLFQPSCEFKTILASSPKNEQFAIQCIQPYSKGFLVGGKECTILFYEKDVDLKNPYKLCSKKIQFRDMKAMITSLLLTPNEEKLIVGVDSGQLLQVPFTSDSMQLNEENSKCEPLFMPFHSDKITGLDVCIRKSLVATCSVDKTVRIWNYSDNQLENSKEFEEEAYAVAFHPSGFHIIVAFTEKIRLMNIFENDLISFKELSVKNCREIQFSNGGHFFAITNVSMVQVFQFYTGENPSNLVFRGSGKVRTIFWEEDDQGFYTGSTDGLVIYWRVDDNGPQKTQIAQFNNLIITSITGLYNPDTTTQGLERILFVSGVSSSQENEGEKCVYKLVISCRQDKEGREITDNTLKKIYYVSQPEQKIFTGTNVSQIAISHSKKLFFFATEDRPGAIRITKYPFTNEIMEIQSHFGPITRMRISFKDNYIFTAGEDGALIIYENKEKEYQVKIENESVEAAAEEFLIPRDQYNDQKREIEKLKRQLNEERMKQEQQIKEKMKDRDDKINQLENQQKDSDNRDLNKYQLLEREKNEMIESYEEKKRMMKLQHENNKRTIENEYKKKIALEMSRNEELAREKEKEEKRFQSEIQQYQEEHLRQMEEKRRHYEEQLAIEKQLYNDLHLKREELAYKFDQKRNKLEMEAEELIDQLKEENESKMQVLFKNLEKAEIKKMDRRNDYDTEAQKLEEQKSKLKGTMEDITSIQETNKMLQKEKESHAKEIDEREKTIRDKGRRIYELKKKTQELEKFKFVLDYKIKELKRDIGPKEEEIAKMKEQIANMNSEILHFKRTNANLKLIVTDLRLRQEGMKKEIEDQSKVIQQNNQYIKAFEQDMSDCHQHIADYKKLKQKVLNLYNQYVQGDDSKKKRLENNDQQKEIMKERAHLETSVNNLKIKHDKNQSVHKSDTTIIMKHNTFLIFEINHLKREKKKILEDKAKMLMQATQKKKQDGTSRVDIDSLEKEIQKNEDEKRKLKEDIEKLRQYNDQIKNQLRQQIQNQQDDDEDN.

One copy of the WD 1 repeat lies at 72-113 (PGTKGITCMTLSPSKRLLAWSEDCDSGIIVVFDLIKLDKLEK). The tract at residues 117 to 143 (QNYQEPSDKDKLDKQAEKDRRDRFEKE) is disordered. Residues 122–143 (PSDKDKLDKQAEKDRRDRFEKE) are compositionally biased toward basic and acidic residues. WD repeat units lie at residues 309–348 (PKNE…KNPY), 359–398 (DMKA…MQLN), 411–450 (FHSD…LENS), 535–574 (RGSG…PQKT), and 700–739 (SHFG…YQVK). Coiled coils occupy residues 756–1016 (RDQY…REKT), 1045–1079 (IKEL…FKRT), and 1209–1285 (INHL…QIQN).

This sequence belongs to the CFAP57 family. In terms of assembly, forms a heterodimer with CFAP57C. Associates with components of the nexin-dynein regulatory complex (N-DRC) and the CFAP184:CFAP263 complex.

The protein resides in the cell projection. It localises to the cilium. Its function is as follows. Associates with components of the nexin-dynein regulatory complex (N-DRC), a key regulator of ciliary/flagellar motility, and might act as an inner dynein arm (IDA) hub or linkage. The chain is Cilia- and flagella-associated protein 57 A (CFAP57A) from Tetrahymena thermophila (strain SB210).